The chain runs to 496 residues: Thiamine transporter 2 (496 aa).

Topologically, residues 1 to 7 (MDCYRTS) are cytoplasmic. Residues 8 to 28 (PSNSWIYTTVILCIFGFFSMM) form a helical membrane-spanning segment. Residues 29–53 (RPSEPFLIPYLSGPDKNLTSEEMTN) are Extracellular-facing. N-linked (GlcNAc...) asparagine glycosylation is present at asparagine 45. A helical membrane pass occupies residues 54 to 74 (EIFPVWTYSYLVLLLPVLVLT). Residues 75 to 81 (DYVRYKP) are Cytoplasmic-facing. The chain crosses the membrane as a helical span at residues 82–102 (VIILQGISFIITWLLLLFGQG). Over 103-110 (VKTMQVVE) the chain is Extracellular. Residues 111–131 (FFYGMVTATEVAYYAYIYSVV) form a helical membrane-spanning segment. Over 132-144 (SPEHYQRVSGYCR) the chain is Cytoplasmic. A helical membrane pass occupies residues 145 to 165 (SVTLVAYTAGSVLAQLLVSLA). Asparagine 166 carries an N-linked (GlcNAc...) asparagine glycan. Residues 166-169 (NLSY) lie on the Extracellular side of the membrane. The chain crosses the membrane as a helical span at residues 170–190 (FYLNVISLASVSVAFLFSLFL). Topologically, residues 191–282 (PMPKKSMFFH…YSSKRLFYWS (92 aa)) are cytoplasmic. Positions 210-248 (SSSVNPVLEETHEGEAPDCEKQKPTSEIPSTSGKLHKGQ) are disordered. Residues 218–233 (EETHEGEAPDCEKQKP) show a composition bias toward basic and acidic residues. Residues 234-248 (TSEIPSTSGKLHKGQ) are compositionally biased toward polar residues. A helical membrane pass occupies residues 283–303 (LWWAFATAGFNQILNYVQILW). At 304–316 (DYKSPSQDSSIYN) the chain is on the extracellular side. Residues 317-337 (GAVEATATFGGAVAAFAVGYV) traverse the membrane as a helical segment. Over 338 to 342 (KVNWD) the chain is Cytoplasmic. The chain crosses the membrane as a helical span at residues 343–363 (LLGELALAVFSVVNAGSLFLM). Residues 364-375 (HYTANIWACYAG) lie on the Extracellular side of the membrane. Residues 376-396 (YLIFKSSYMLLITIAVFQIAV) traverse the membrane as a helical segment. Over 397–405 (NLSVERYAL) the chain is Cytoplasmic. Residues 406-426 (VFGINTFIALVIQTIITVIVV) form a helical membrane-spanning segment. Residues 427–434 (DQRGLNLP) lie on the Extracellular side of the membrane. Residues 435 to 455 (ISIQFLVYGSYFAVIAGIFLM) traverse the membrane as a helical segment. The Cytoplasmic portion of the chain corresponds to 456-496 (RSMYIIYSTKSQKDVQSPAPSENPDMSHPEEESNAIMSTKL). Residues 469–496 (DVQSPAPSENPDMSHPEEESNAIMSTKL) are disordered.

It belongs to the reduced folate carrier (RFC) transporter (TC 2.A.48) family.

It is found in the membrane. The catalysed reaction is thiamine(out) + H(+)(in) = thiamine(in) + H(+)(out). The enzyme catalyses pyridoxine(out) + n H(+)(out) = pyridoxine(in) + n H(+)(in). In terms of biological role, mediates high affinity thiamine uptake, probably via a proton anti-port mechanism. Has no folate transport activity. Mediates H(+)-dependent pyridoxine transport. This chain is Thiamine transporter 2 (SLC19A3), found in Macaca fascicularis (Crab-eating macaque).